The chain runs to 122 residues: MVQQETRLRVADNTGAKEILCIRVLGGSHVRYGRVGDVIVASVKEATPGGAVKKGEVVRAVIVRTAKEYGRPDGSHIRFDDNAAVIIGKDNNPRGTRIFGPVARELRERAFMKIISLAPEVL.

It belongs to the universal ribosomal protein uL14 family. Part of the 50S ribosomal subunit. Forms a cluster with proteins L3 and L19. In the 70S ribosome, L14 and L19 interact and together make contacts with the 16S rRNA in bridges B5 and B8.

In terms of biological role, binds to 23S rRNA. Forms part of two intersubunit bridges in the 70S ribosome. The sequence is that of Large ribosomal subunit protein uL14 from Roseiflexus castenholzii (strain DSM 13941 / HLO8).